Here is a 663-residue protein sequence, read N- to C-terminus: Zeaxanthin epoxidase, chloroplastic (663 aa).

Residues Met1–Lys50 constitute a chloroplast transit peptide. FAD contacts are provided by residues Lys81–Glu109 and Thr359–Asp372. The FHA domain occupies Leu547–Gly611.

FAD is required as a cofactor. Higher expression in leaves than in roots.

It is found in the plastid. The protein localises to the chloroplast membrane. Its subcellular location is the chloroplast thylakoid membrane. It catalyses the reaction all-trans-zeaxanthin + 4 reduced [2Fe-2S]-[ferredoxin] + 2 O2 + 4 H(+) = all-trans-violaxanthin + 4 oxidized [2Fe-2S]-[ferredoxin] + 2 H2O. It functions in the pathway plant hormone biosynthesis; abscisate biosynthesis. Converts zeaxanthin into antheraxanthin and subsequently violaxanthin. Involved in the epoxidation of zeaxanthin. Plays an important role in resistance to stresses, seed development and dormancy. This chain is Zeaxanthin epoxidase, chloroplastic (ABA2), found in Nicotiana plumbaginifolia (Leadwort-leaved tobacco).